A 233-amino-acid polypeptide reads, in one-letter code: DnaA regulatory inactivator Hda (233 aa).

This sequence belongs to the DnaA family. HdA subfamily. As to quaternary structure, the active form seems to be an ADP-bound monomer. Forms the RIDA complex (regulatory inactivation of DnaA) of ATP-DnaA, ADP-Hda and the DNA-loaded beta sliding clamp (dnaN).

Functionally, mediates the interaction of DNA replication initiator protein DnaA with DNA polymerase subunit beta sliding clamp (dnaN). Stimulates hydrolysis of ATP-DnaA to ADP-DnaA, rendering DnaA inactive for reinitiation, a process called regulatory inhibition of DnaA or RIDA. The chain is DnaA regulatory inactivator Hda from Shigella boydii serotype 4 (strain Sb227).